Here is a 245-residue protein sequence, read N- to C-terminus: 1-(5-phosphoribosyl)-5-[(5-phosphoribosylamino)methylideneamino] imidazole-4-carboxamide isomerase (245 aa).

The Proton acceptor role is filled by Asp11. Catalysis depends on Asp132, which acts as the Proton donor.

This sequence belongs to the HisA/HisF family.

Its subcellular location is the cytoplasm. It catalyses the reaction 1-(5-phospho-beta-D-ribosyl)-5-[(5-phospho-beta-D-ribosylamino)methylideneamino]imidazole-4-carboxamide = 5-[(5-phospho-1-deoxy-D-ribulos-1-ylimino)methylamino]-1-(5-phospho-beta-D-ribosyl)imidazole-4-carboxamide. It functions in the pathway amino-acid biosynthesis; L-histidine biosynthesis; L-histidine from 5-phospho-alpha-D-ribose 1-diphosphate: step 4/9. The chain is 1-(5-phosphoribosyl)-5-[(5-phosphoribosylamino)methylideneamino] imidazole-4-carboxamide isomerase from Xanthobacter autotrophicus (strain ATCC BAA-1158 / Py2).